The following is a 572-amino-acid chain: Probable serine/threonine-protein kinase At1g54610 (572 aa).

The interval 1-89 is disordered; it reads MGCVFGREAA…SNPSKHWRGE (89 aa). The span at 9 to 40 shows a compositional bias: low complexity; sequence AATTTTAEAKQAKSSKASSGVVVVGESSVTKS. Basic and acidic residues predominate over residues 47–67; sequence DVEKKKNEEANGDKERKSSKG. The segment covering 74–83 has biased composition (polar residues); it reads KPNPRLSNPS. A Protein kinase domain is found at 118 to 402; the sequence is FEKIDKIGQG…ASAALKSEFF (285 aa). ATP contacts are provided by residues 124–132 and K147; that span reads IGQGTYSNV. The active-site Proton acceptor is the D242. Disordered regions lie at residues 409-474 and 526-572; these read CEPA…NVDR and SSFN…AVVA. Basic and acidic residues predominate over residues 419–434; it reads PSKEIDAKRRDEETRR. The segment covering 554–572 has biased composition (basic residues); that stretch reads SRKKKDNTKSSKGKRAVVA.

The protein belongs to the protein kinase superfamily. Ser/Thr protein kinase family.

The catalysed reaction is L-seryl-[protein] + ATP = O-phospho-L-seryl-[protein] + ADP + H(+). It catalyses the reaction L-threonyl-[protein] + ATP = O-phospho-L-threonyl-[protein] + ADP + H(+). The sequence is that of Probable serine/threonine-protein kinase At1g54610 from Arabidopsis thaliana (Mouse-ear cress).